A 140-amino-acid chain; its full sequence is L-fucose mutarotase (140 aa).

His22 acts as the Proton donor in catalysis. Substrate contacts are provided by residues Asp30, Arg107, and 129 to 131; that span reads YGN.

It belongs to the RbsD / FucU family. FucU mutarotase subfamily. Homodecamer.

It is found in the cytoplasm. The catalysed reaction is alpha-L-fucose = beta-L-fucose. It functions in the pathway carbohydrate metabolism; L-fucose metabolism. In terms of biological role, involved in the anomeric conversion of L-fucose. The polypeptide is L-fucose mutarotase (Klebsiella pneumoniae subsp. pneumoniae (strain ATCC 700721 / MGH 78578)).